A 490-amino-acid chain; its full sequence is Cardiolipin synthase 1 (490 aa).

The next 2 helical transmembrane spans lie at 9 to 29 and 42 to 62; these read ILTI…FVII and WAWL…YLFL. PLD phosphodiesterase domains lie at 225–252 and 403–430; these read MNNR…GDDY and QNGF…DFRS. Catalysis depends on residues histidine 230, lysine 232, aspartate 237, histidine 408, lysine 410, and aspartate 415.

Belongs to the phospholipase D family. Cardiolipin synthase subfamily.

The protein resides in the cell membrane. The enzyme catalyses 2 a 1,2-diacyl-sn-glycero-3-phospho-(1'-sn-glycerol) = a cardiolipin + glycerol. Catalyzes the reversible phosphatidyl group transfer from one phosphatidylglycerol molecule to another to form cardiolipin (CL) (diphosphatidylglycerol) and glycerol. This Staphylococcus epidermidis (strain ATCC 35984 / DSM 28319 / BCRC 17069 / CCUG 31568 / BM 3577 / RP62A) protein is Cardiolipin synthase 1 (cls1).